A 90-amino-acid chain; its full sequence is DNA-binding protein HU (90 aa).

Positions 57-90 are disordered; that stretch reads ARKGVNPQTRKPITIPERKVPKFKPGKALKEKVK.

It belongs to the bacterial histone-like protein family.

Its function is as follows. Histone-like DNA-binding protein which is capable of wrapping DNA to stabilize it, and thus to prevent its denaturation under extreme environmental conditions. This Thermotoga maritima (strain ATCC 43589 / DSM 3109 / JCM 10099 / NBRC 100826 / MSB8) protein is DNA-binding protein HU (hup).